Here is a 388-residue protein sequence, read N- to C-terminus: MIISAASDYRAAAQARLPPFLFHYIDGGAYAEHTLRRNVSDLADVALRQRVLRNMSDLRLSTELFGETLAMPVALGPVGLTGMYARRGEVQAARAAAARGIPFTLSTVSVCPIEEVAPAIERPMWFQLYVLKDRGFMRNALERAKAAGVTTLVFTVDMPTPGARYRDAHSGMSGPNASLRRMLQAVTHPRWAWDVGVLGKPHDLGNISAYRGNPTGLQDYIGWLGANFDPSIAWKDLEWIREFWTGPMVIKGILDPEDARDAVRFGADGIVVSNHGGRQLDGVLSSARALPAIADAVKGELKILADSGIRSGLDVVRMLALGADAVLLGRAFVYALAADGQAGVENLLTLIEKEMRVAMTLTGTHSIAQISADALSRVTREQANAVSP.

The FMN hydroxy acid dehydrogenase domain maps to 1–380 (MIISAASDYR…SADALSRVTR (380 aa)). Position 24 (Tyr-24) interacts with substrate. Positions 106 and 127 each coordinate FMN. Substrate is bound at residue Tyr-129. Thr-155 contacts FMN. Arg-164 contacts substrate. Lys-251 lines the FMN pocket. The Proton acceptor role is filled by His-275. Residue Arg-278 participates in substrate binding. Residue 306-330 (DSGIRSGLDVVRMLALGADAVLLGR) coordinates FMN.

It belongs to the FMN-dependent alpha-hydroxy acid dehydrogenase family. FMN is required as a cofactor.

The protein resides in the cell inner membrane. The catalysed reaction is (S)-lactate + A = pyruvate + AH2. Its function is as follows. Catalyzes the conversion of L-lactate to pyruvate. Is coupled to the respiratory chain. This is L-lactate dehydrogenase from Xanthomonas oryzae pv. oryzae (strain MAFF 311018).